The primary structure comprises 613 residues: Probable Xaa-Pro aminopeptidase P (613 aa).

4 residues coordinate Mn(2+): D408, D419, E517, and E531.

The protein belongs to the peptidase M24B family. Requires Mn(2+) as cofactor.

The catalysed reaction is Release of any N-terminal amino acid, including proline, that is linked to proline, even from a dipeptide or tripeptide.. Its function is as follows. Catalyzes the removal of a penultimate prolyl residue from the N-termini of peptides. This chain is Probable Xaa-Pro aminopeptidase P (ampp), found in Penicillium rubens (strain ATCC 28089 / DSM 1075 / NRRL 1951 / Wisconsin 54-1255) (Penicillium chrysogenum).